Consider the following 449-residue polypeptide: Doublesex- and mab-3-related transcription factor A2 (449 aa).

Residues 57 to 104 (CARCRNHGVVSALKGHKRYCRWKDCMCAKCTLIAERQRVMAAQVALRR) constitute a DNA-binding region (DM). Residues 166-259 (KNQLSGSATP…PSPSSAASRH (94 aa)) are disordered. A compositionally biased stretch (polar residues) spans 167-177 (NQLSGSATPQP). Residues 230–240 (GSVSSIGSDSG) are compositionally biased toward low complexity. The DMA domain maps to 260-295 (MNAIDILTRVFPSHKRSVLELVLQGCGKDVVQAIEQ).

It belongs to the DMRT family.

Its subcellular location is the nucleus. Functionally, may be involved in sexual development. The polypeptide is Doublesex- and mab-3-related transcription factor A2 (dmrta2) (Oreochromis niloticus (Nile tilapia)).